The sequence spans 244 residues: Putative B3 domain-containing protein At2g31460 (244 aa).

The segment at residues 49-147 (SSMHMENSGF…PVHDGVNLSG (99 aa)) is a DNA-binding region (TF-B3). Disordered regions lie at residues 175 to 196 (DGNL…QDSV) and 217 to 244 (DSQG…GHYQ). Basic and acidic residues predominate over residues 235–244 (GSIRDSGHYQ).

The protein resides in the nucleus. This is Putative B3 domain-containing protein At2g31460 from Arabidopsis thaliana (Mouse-ear cress).